The sequence spans 208 residues: Small ribosomal subunit protein uS4 (208 aa).

The 61-residue stretch at 98 to 158 (GRLDNVVYRM…EKSKKQARIK (61 aa)) folds into the S4 RNA-binding domain.

Belongs to the universal ribosomal protein uS4 family. As to quaternary structure, part of the 30S ribosomal subunit. Contacts protein S5. The interaction surface between S4 and S5 is involved in control of translational fidelity.

In terms of biological role, one of the primary rRNA binding proteins, it binds directly to 16S rRNA where it nucleates assembly of the body of the 30S subunit. Its function is as follows. With S5 and S12 plays an important role in translational accuracy. In Haemophilus ducreyi (strain 35000HP / ATCC 700724), this protein is Small ribosomal subunit protein uS4.